A 246-amino-acid polypeptide reads, in one-letter code: Bis(5'-nucleosyl)-tetraphosphatase PrpE [asymmetrical] (246 aa).

It belongs to the PrpE family. Ni(2+) serves as cofactor.

The enzyme catalyses P(1),P(4)-bis(5'-guanosyl) tetraphosphate + H2O = GMP + GTP + 2 H(+). In terms of biological role, asymmetrically hydrolyzes Ap4p to yield AMP and ATP. The chain is Bis(5'-nucleosyl)-tetraphosphatase PrpE [asymmetrical] from Bacillus anthracis (strain A0248).